The chain runs to 360 residues: MKEIERRCLRALIGIVQNIYDQMKAGQVPELHIATRTKYNIEFNEESEVWVYGDRKSVRSAKTVKGAYRILKMTYVIGFLKEQLNLNKSSTLRELYYISEGWGAAKFEEQPESDRLVEDLEILTNFQREHFHIRPEEDGATVIGPLRVREETRRGVREIHCQDDVGEGGYQIPVNVDKIEFVDHDAKFVIAIETGGMRDRLVENGFDEKYDAIIVHLKGQPARSTRRLLRRLNTELNLPVVVFTDGDPWSYRIFASVAYGSIKSAHLSEYLATPAAQFVGIRPTDIVKYDLPADKLTEEDIKALNAILTDPRFDSEFWKKEVNLQLEINKKSEQQALAKYGLDYVTDVYLPERLSELGVI.

Residues 3 to 140 form the Topo IIA-type catalytic domain; the sequence is EIERRCLRAL…FHIRPEEDGA (138 aa). Residue Tyr97 is the O-(5'-phospho-DNA)-tyrosine intermediate of the active site. Mg(2+) is bound by residues Glu193 and Asp245.

This sequence belongs to the TOP6A family. As to quaternary structure, homodimer. Heterotetramer of two Top6A and two Top6B chains. Mg(2+) serves as cofactor.

The catalysed reaction is ATP-dependent breakage, passage and rejoining of double-stranded DNA.. Functionally, relaxes both positive and negative superturns and exhibits a strong decatenase activity. This is Type 2 DNA topoisomerase 6 subunit A from Archaeoglobus fulgidus (strain ATCC 49558 / DSM 4304 / JCM 9628 / NBRC 100126 / VC-16).